Consider the following 446-residue polypeptide: Tubulin beta-6 chain (446 aa).

The MREI motif motif lies at 1 to 4; that stretch reads MREI. GTP contacts are provided by Gln11, Glu69, Ser138, Gly142, Thr143, and Gly144. Mg(2+) is bound at residue Glu69. Phosphoserine; by CDK1 is present on Ser172. Asn204 and Asn226 together coordinate GTP. A 5-glutamyl polyglutamate modification is found at Glu438.

The protein belongs to the tubulin family. In terms of assembly, dimer of alpha and beta chains. A typical microtubule is a hollow water-filled tube with an outer diameter of 25 nm and an inner diameter of 15 nM. Alpha-beta heterodimers associate head-to-tail to form protofilaments running lengthwise along the microtubule wall with the beta-tubulin subunit facing the microtubule plus end conferring a structural polarity. Microtubules usually have 13 protofilaments but different protofilament numbers can be found in some organisms and specialized cells. Requires Mg(2+) as cofactor. Post-translationally, some glutamate residues at the C-terminus are polyglycylated, resulting in polyglycine chains on the gamma-carboxyl group. Glycylation is mainly limited to tubulin incorporated into axonemes (cilia and flagella) whereas glutamylation is prevalent in neuronal cells, centrioles, axonemes, and the mitotic spindle. Both modifications can coexist on the same protein on adjacent residues, and lowering polyglycylation levels increases polyglutamylation, and reciprocally. Cilia and flagella glycylation is required for their stability and maintenance. Flagella glycylation controls sperm motility. Some glutamate residues at the C-terminus are polyglutamylated, resulting in polyglutamate chains on the gamma-carboxyl group. Polyglutamylation plays a key role in microtubule severing by spastin (SPAST). SPAST preferentially recognizes and acts on microtubules decorated with short polyglutamate tails: severing activity by SPAST increases as the number of glutamates per tubulin rises from one to eight, but decreases beyond this glutamylation threshold. Glutamylation is also involved in cilia motility. In terms of processing, phosphorylated on Ser-172 by CDK1 during the cell cycle, from metaphase to telophase, but not in interphase. This phosphorylation inhibits tubulin incorporation into microtubules.

It localises to the cytoplasm. The protein resides in the cytoskeleton. Its function is as follows. Tubulin is the major constituent of microtubules, a cylinder consisting of laterally associated linear protofilaments composed of alpha- and beta-tubulin heterodimers. Microtubules grow by the addition of GTP-tubulin dimers to the microtubule end, where a stabilizing cap forms. Below the cap, tubulin dimers are in GDP-bound state, owing to GTPase activity of alpha-tubulin. This chain is Tubulin beta-6 chain (TUBB6), found in Bos taurus (Bovine).